Reading from the N-terminus, the 427-residue chain is MTLWVLGLNHQTAPVELRERAAFAGEALPRALGSLRDTPQIAEAVLLSTCNRTELYAVADSAQALDQWLHAQAGDLQGYLYQHADAEAVRHLFRVATGLDSMVLGEPQILGQVKDAWSTARDHGLLGQRLDRLFQQTFSVAKRARTDTQVGANPVSVASAAVRLAQNAFARLDDSTVLLVGAGETIELAARHLSEGKVRRLLIANRTLAHAQELASRHGGVALPLTELDRHLGEADVVFSATAAREPVIHREMVAKALRARRHKPMLLFDLAVPRDIEAEVGTLNDAFLYTVDDLERAVEDNRRGRREAAAEAEAIIDLQVSRFIETQQASAHQAPLRQLRAFGEATRTELLERARQQLANGKPADEVLELLAHGLTNRLLHPPTAALRAAALSGDADLTRAAERLFPATPGYRHPPVRPDDADPAP.

Substrate is bound by residues 49-52 (TCNR), Ser-101, 106-108 (EPQ), and Gln-112. The Nucleophile role is filled by Cys-50. 181-186 (GAGETI) serves as a coordination point for NADP(+). A disordered region spans residues 407-427 (FPATPGYRHPPVRPDDADPAP). Residues 418–427 (VRPDDADPAP) show a composition bias toward basic and acidic residues.

It belongs to the glutamyl-tRNA reductase family. Homodimer.

The catalysed reaction is (S)-4-amino-5-oxopentanoate + tRNA(Glu) + NADP(+) = L-glutamyl-tRNA(Glu) + NADPH + H(+). It functions in the pathway porphyrin-containing compound metabolism; protoporphyrin-IX biosynthesis; 5-aminolevulinate from L-glutamyl-tRNA(Glu): step 1/2. Catalyzes the NADPH-dependent reduction of glutamyl-tRNA(Glu) to glutamate 1-semialdehyde (GSA). This chain is Glutamyl-tRNA reductase, found in Stenotrophomonas maltophilia (strain K279a).